The following is a 148-amino-acid chain: Homoprotocatechuate degradative operon repressor (148 aa).

Residues 2–134 (HDSLTIALLQ…LTHLLEEFIA (133 aa)) enclose the HTH marR-type domain.

In terms of biological role, repressor for the homoprotocatechuate catabolic pathway hpc operon. The sequence is that of Homoprotocatechuate degradative operon repressor (hpcR) from Escherichia coli.